Consider the following 166-residue polypeptide: MLRGVDEVAKELKVSKTAIYNKLKLKEFRRKVVKKQGKSMIDEELFNLIKDSLKVKNEVEYKDYIEESKDEVKSEIAMDREGSLNLNKSLIDTLIAQLEEKDKQIAELHKLIENNQVLLKKEQETKINILEFEDHFKEVDNKLSSIKEKMNQRKEKKSFFKNFFKK.

The protein to C.perfringens pCP13 PCP12.

This is an uncharacterized protein from Clostridium perfringens.